Reading from the N-terminus, the 1563-residue chain is MDTEREALQCTAYPEVQSFCQRHGLAFEVVDLRWGIPNTQATDYLTTELCLEELERCQKTSIGPAFVALLGDQYGPCPVPRRIEEKEWEALRAQLTSRPRDLELVTRHFQRDDNTIPPTYVLQPSGSLVVPGPEEATLTSVLRGGAQEAWRLGLISQEQWMCYHRSVIEWEIELGLLSSARGDQGATVFLRDVQDLNKHILDDCSLKMVDRLVDGCLDTNAQSLLSGLKGRILDAQPGALKSHHLSWSRDLVNPKNKAHARYLKQLSEQFVARTNHQVLEQLRELELARQELGWLYQEIRHHLWQSTESTKVFCGHQELLAQLRQQLRQDESRTHTPLVLFGPPGIGKTSLMCKLAQQVPELLGHKTVVVLRLLGTSKLSLDARSLLRSLSFQVCLAYGLPLPPAQVLEAHSRVGHFFHTLLHTVSQRNFESLVLLLDSVDDLDSICHSPRVSWLPLKCPPRVHLILSTCSGQQVLHNLQQTLKDPSTYWEVKALSGSQGQEFIQLLLAAEKRMLSPGQRDVLWASLPECGHPGRLRLAFEEARKWASFTVPVPLATTAEEATHQLCIRLEETHGALLVAHVLGYIVSSRYGLSEAELKDVLSLDDEVLQAVYRDWTPPSKELLRFPPLLWVRLRRDLGHCLVRRPVDGCMLLAIAHRQLSQVIQVRYLSGPERAKRHGVLAEFFSGAWSQGIKKLITLPLVGKPLNLDRKVAPQPLWFSSTVANLRKLTELPFHLLHAGRLEELKQEVLGNMSWISCRGISGGIEVLLDDFDMCAPHMNSPEVDLVREAIQLCGPAVELRGLEKSVLYTELLARLLFFAASHPAMIGQLCQQAQSWFRACPYPMLVPLAGFLQPPGGPLRATLTGCHKGITAIAWSLEEKLLVVGTQDGAMVVWDVEEQQVVHVLMGHTAEVKCVRVFAQGTLAISASKDHTLRLWSLLSGQEKVTILDGGSQNPTEPQSWDLHVDERNNVVYSTSGARINMWNLETSKLVFCITGDVSDPWVCVALLAAQGLLLALSKGGQVSLWSSAMGKLQEKHQLSSIKEETPTCAVSIQSRARLVAGFSSGSIALVSAGEDRLLEKLPEAVGFLVVSEDDSLLVAGFGRFVRIFLADSQGFHRFMASDLEHEDMVETAVLGPENNLIITGSRDALIQVWSLSEQGTLLNVLEGVGAPVSLLVRGGTLVVSASRKSSSFKVWDLKSTKKLQSPTPFLDRTGLAAVSHHGSFVYFPKVGDKNKVTIWDLAEGEEQDCLDTSNEVRCLEVAEQAKLLFTGLVSGIVLVFPLNSRQDVLCIPPPEARKAVNCMSLSKSENRLAIAYDNIVLVLDISPGDPCPAIEGPTYTFYTQLPETIVSVAVLADYRVVYGMSDGSLFLYDCACSKVFPLEAHGSRVSCVEVSHSEQLAVSGAEDALLCLWDLQACRGMFEMSYENSCCRGVRCACFSRDDKHVFAGMEDRSVTAWSTVDGTLLAVQFVHAVINRIIPTSNGFMAPTSHGYLIRERFQCPSVRASQQDPLKNFKKAVWLVKTRQREELAAAEASQDAEPVAVEGKESKSNKRSQVCLIL.

The stretch at 274 to 314 (TNHQVLEQLRELELARQELGWLYQEIRHHLWQSTESTKVFC) is one WD 1 repeat. The 331-residue stretch at 336–666 (TPLVLFGPPG…HRQLSQVIQV (331 aa)) folds into the NACHT domain. 342–349 (GPPGIGKT) provides a ligand contact to ATP. WD repeat units lie at residues 866 to 905 (GCHK…VVHV), 908 to 947 (GHTA…EKVT), 954 to 994 (QNPT…LVFC), 998 to 1037 (DVSD…LQEK), 1044 to 1082 (KEET…LLEK), 1126 to 1165 (EHED…TLLN), 1168 to 1207 (EGVG…KLQS), 1212 to 1251 (LDRT…EQDC), 1253 to 1292 (DTSN…DVLC), 1346 to 1385 (QLPE…FPLE), 1386 to 1425 (AHGS…GMFE), and 1431 to 1470 (SCCR…LLAV). A disordered region spans residues 1534–1563 (AAEASQDAEPVAVEGKESKSNKRSQVCLIL).

In terms of assembly, may interact with HSP90AA1, HSP90AB1 and BAG2.

It is found in the cytoplasm. It localises to the cytosol. In terms of biological role, may play a role in the control of androgen receptor (AR) protein steady-state levels. This is NACHT domain- and WD repeat-containing protein 1 (Nwd1) from Mus musculus (Mouse).